The sequence spans 194 residues: Chitin synthase 2 (194 aa).

This sequence belongs to the chitin synthase family. Class III subfamily.

The protein localises to the cell membrane. The catalysed reaction is [(1-&gt;4)-N-acetyl-beta-D-glucosaminyl](n) + UDP-N-acetyl-alpha-D-glucosamine = [(1-&gt;4)-N-acetyl-beta-D-glucosaminyl](n+1) + UDP + H(+). Functionally, polymerizes chitin, a structural polymer of the cell wall and septum, by transferring the sugar moiety of UDP-GlcNAc to the non-reducing end of the growing chitin polymer. The polypeptide is Chitin synthase 2 (CHS2) (Ajellomyces capsulatus (Darling's disease fungus)).